A 238-amino-acid chain; its full sequence is Urease accessory protein UreG (238 aa).

Over residues 1–15 the composition is skewed to basic and acidic residues; the sequence is MPPHLIDGEPHDHAH. Residues 1 to 27 are disordered; that stretch reads MPPHLIDGEPHDHAHDRPKRQRTPGEP. Residue 34–41 participates in GTP binding; sequence GPVGSGKT.

Belongs to the SIMIBI class G3E GTPase family. UreG subfamily. As to quaternary structure, homodimer. UreD, UreF and UreG form a complex that acts as a GTP-hydrolysis-dependent molecular chaperone, activating the urease apoprotein by helping to assemble the nickel containing metallocenter of UreC. The UreE protein probably delivers the nickel.

It is found in the cytoplasm. Its function is as follows. Facilitates the functional incorporation of the urease nickel metallocenter. This process requires GTP hydrolysis, probably effectuated by UreG. This chain is Urease accessory protein UreG, found in Nocardia farcinica (strain IFM 10152).